The following is a 493-amino-acid chain: Glutamyl-tRNA(Gln) amidotransferase subunit A (493 aa).

Catalysis depends on charge relay system residues Lys78 and Ser158. Ser182 acts as the Acyl-ester intermediate in catalysis.

It belongs to the amidase family. GatA subfamily. As to quaternary structure, heterotrimer of A, B and C subunits.

The enzyme catalyses L-glutamyl-tRNA(Gln) + L-glutamine + ATP + H2O = L-glutaminyl-tRNA(Gln) + L-glutamate + ADP + phosphate + H(+). Functionally, allows the formation of correctly charged Gln-tRNA(Gln) through the transamidation of misacylated Glu-tRNA(Gln) in organisms which lack glutaminyl-tRNA synthetase. The reaction takes place in the presence of glutamine and ATP through an activated gamma-phospho-Glu-tRNA(Gln). The protein is Glutamyl-tRNA(Gln) amidotransferase subunit A of Rickettsia conorii (strain ATCC VR-613 / Malish 7).